The sequence spans 695 residues: Segment polarity protein dishevelled homolog DVL-1 (695 aa).

One can recognise a DIX domain in the interval 1–85; it reads MAETKIIYHM…RVVSWLVLAE (85 aa). Residues 89-237 are disordered; the sequence is SDAGSQGTDS…LRQADRASSF (149 aa). Positions 142–151 are enriched in basic residues; that stretch reads SHRRERARRR. The span at 152–171 shows a compositional bias: basic and acidic residues; the sequence is NREEAARTNGHPRGDRRRDV. Over residues 176-192 the composition is skewed to low complexity; that stretch reads DSASTALSSELESSSFV. S194 is modified (phosphoserine). A compositionally biased stretch (low complexity) spans 200–214; sequence TSRLSSSTEQSTSSR. The segment covering 215–228 has biased composition (basic residues); the sequence is LIRKHKRRRRKQRL. The 73-residue stretch at 251 to 323 folds into the PDZ domain; it reads TVTLNMERHH…NDDAVRVLRE (73 aa). In terms of domain architecture, DEP spans 425–499; the sequence is PDSGLEIRDR…SEQCYYVFGD (75 aa). The disordered stretch occupies residues 543 to 667; sequence PGPPPCFPPA…PGGPPVRELA (125 aa). The segment covering 551–580 has biased composition (low complexity); that stretch reads PAYQDPGFSYGSGSTGSQQSEGSKSSGSTR. The span at 625-636 shows a compositional bias: polar residues; that stretch reads SRGSSPRSQASA.

It belongs to the DSH family. In terms of assembly, interacts with CXXC4. Interacts (via PDZ domain) with NXN. Interacts with BRD7 and INVS. Interacts (via PDZ domain) with VANGL1 and VANGL2 (via C-terminus). Interacts with ARRB1; the interaction is enhanced by phosphorylation of DVL1. Interacts with CYLD. Interacts (via PDZ domain) with RYK. Self-associates (via DIX domain) and forms higher homooligomers. Interacts (via PDZ domain) with DACT1 and FZD7, where DACT1 and FZD7 compete for the same binding site. Interacts (via DEP domain) with MUSK; the interaction is direct and mediates the formation a DVL1, MUSK and PAK1 ternary complex involved in AChR clustering. Interacts (via PDZ domain) with TMEM88. Interacts with DCDC2. Interacts with FOXK2. Interacts with PKD1 (via extracellular domain). Interacts (via PDZ domain) with CCDC88C/DAPLE; competes with CCDC88C for binding to frizzled receptor FZD7 and dissociates from CCDC88C following initiation of non-canonical Wnt signaling when CCDC88C displaces DVL1 from ligand-activated FZD7. Post-translationally, ubiquitinated; undergoes both 'Lys-48'-linked ubiquitination, leading to its subsequent degradation by the ubiquitin-proteasome pathway, and 'Lys-63'-linked ubiquitination. The interaction with INVS is required for ubiquitination. Deubiquitinated by CYLD, which acts on 'Lys-63'-linked ubiquitin chains.

It is found in the cell membrane. The protein resides in the cytoplasm. It localises to the cytosol. Its subcellular location is the cytoplasmic vesicle. Functionally, participates in Wnt signaling by binding to the cytoplasmic C-terminus of frizzled family members and transducing the Wnt signal to down-stream effectors. Plays a role both in canonical and non-canonical Wnt signaling. Plays a role in the signal transduction pathways mediated by multiple Wnt genes. Required for LEF1 activation upon WNT1 and WNT3A signaling. DVL1 and PAK1 form a ternary complex with MUSK which is important for MUSK-dependent regulation of AChR clustering during the formation of the neuromuscular junction (NMJ). This Homo sapiens (Human) protein is Segment polarity protein dishevelled homolog DVL-1 (DVL1).